A 288-amino-acid polypeptide reads, in one-letter code: NAD kinase (288 aa).

Aspartate 70 acts as the Proton acceptor in catalysis. Residues 70–71, 144–145, arginine 155, lysine 172, aspartate 174, 185–190, and glutamine 245 contribute to the NAD(+) site; these read DG, ND, and TGYSLS.

Belongs to the NAD kinase family. A divalent metal cation is required as a cofactor.

The protein resides in the cytoplasm. It catalyses the reaction NAD(+) + ATP = ADP + NADP(+) + H(+). Functionally, involved in the regulation of the intracellular balance of NAD and NADP, and is a key enzyme in the biosynthesis of NADP. Catalyzes specifically the phosphorylation on 2'-hydroxyl of the adenosine moiety of NAD to yield NADP. The protein is NAD kinase of Geobacter sp. (strain M21).